The primary structure comprises 867 residues: MDLNTLPFHSINSVNVSSAPTVNERSYPFLLDASAGVSGFNPVVSSPEKKARMKYKKNSTSPNMDVKSRKKVSRACDFCRQKKIRCDMDQSPRPGNACINCRKHHLDCNFTRTPLKRGPAKGFNRNADEKQKRASGSAKSSSPAVNGSVFSGNEASPSSRAPSITPVDSVNTTTSAIQVPSVTLTAPAPLGVDQKISQDQKPDSWLTYNAQFAQNSPQLAPSIPSPMKLSPANQQAMPPYPQMLGPGSISSYTNSNLGPSAGFRPPTFFSSPSPQPYSGPILASTAPTLDGSYLSNPSNSNPAVMSLSSNFPSPPKPNNPVYLPPRGNPTVNDRVSNVLPSITSFDSSVTTVPSNSPATLNSYTTSVPSGMSRHPMLMNPSTPEPSLGVNSPSLRPLQSLNNVQNSYRVASTQAPPPHPLRNYTSDAESISMRSKSTQASDAATFREVEQLYQENVEWDDAAIDRYYLLIHSTLPILHHSKARLKSELEKAPINLRSSCLHAIYSLVNRPPFATLGHVFHNTPMKAIGLLNLICSNVQDLSNRILHLQTMILLAIESDQRGPTTITGRNGLPQGMWLGAAIGLACNMRLHIQSHLSLQSINEDMDSDEALCRRAWWVLVVLDRWHSMSTCSPLFLPETFINLTIQDQKLLGTFPSQLVRLSLIVGHISDVFQSPDPTDRQSPIVTQQLRSEIDAFRQSVDVVWGQMNLLTLAVTHVKVLLELCINARPSTVLVPAMKMATILSSSSTPMTPLNHHFFSLATCVLIGVFDLPELQNEARRGLEHIRECIEKRRDIVSREDHEDWDYIVLKLINAKMQGMPINSDPSIPPHVPPSSAFAYSNQEMDSATFKDAYLYTRLCNLGYLGFLI.

Positions cysteine 76–cysteine 108 form a DNA-binding region, zn(2)-C6 fungal-type. Disordered regions lie at residues phenylalanine 110–valine 167 and proline 217–leucine 257. Composition is skewed to polar residues over residues serine 137–valine 167 and serine 248–leucine 257.

It localises to the nucleus. This is an uncharacterized protein from Schizosaccharomyces pombe (strain 972 / ATCC 24843) (Fission yeast).